A 538-amino-acid chain; its full sequence is Retinoblastoma-binding protein 5 (538 aa).

WD repeat units lie at residues 22–63 and 64–103; these read DCIS…KIIS and AHIHPVCSLCWSRDGHKLVSASTDNIVSQWDVLSGDCDQR. Lys-129 is covalently cross-linked (Glycyl lysine isopeptide (Lys-Gly) (interchain with G-Cter in SUMO2)). WD repeat units lie at residues 148–188, 196–235, 249–291, and 293–331; these read DDDS…LVAS, SNTTAIKSIEFARKGSCFLINTADRIIRVYDGREILTCGR, VNRT…KILH, and TRGELLLDVAWHPVRPIIASISSGVVSIWAQNQVENWSA. At Thr-252 the chain carries Phosphothreonine; by CDK1. The interval 330–366 is interaction with ASH2L; that stretch reads SAFAPDFKELDENVEYEERESEFDIEDEDKSEPEQTG. A compositionally biased stretch (acidic residues) spans 344 to 360; sequence EYEERESEFDIEDEDKS. Residues 344–377 form a disordered region; that stretch reads EYEERESEFDIEDEDKSEPEQTGADAAEDEEVDV. The residue at position 350 (Ser-350) is a Phosphoserine. The interaction with WDR5 stretch occupies residues 371-380; the sequence is EDEEVDVTSV. Phosphoserine occurs at positions 388 and 389. Residues 408–538 are disordered; sequence VEDPEENPYG…TAGGAISELL (131 aa). Residues 479–490 show a composition bias toward basic residues; that stretch reads SKKKQAGRPKGS. Positions 491 to 510 are enriched in basic and acidic residues; sequence KGKEKDSPFKPKLYKGDRGL. Ser-497 is modified (phosphoserine; by CDK1). Ser-525 is modified (phosphoserine).

In terms of assembly, component of the SET1 complex, at least composed of the catalytic subunit (SETD1A or SETD1B), WDR5, WDR82, RBBP5, ASH2L/ASH2, CXXC1/CFP1, HCFC1 and DPY30. Core component of several methyltransferase-containing complexes including MLL1/MLL, MLL2/3 (also named ASCOM complex) and MLL4/WBP7. Each complex is at least composed of ASH2L, RBBP5, WDR5, DPY30, one or more specific histone methyltransferases (KMT2A/MLL1, KMT2D/MLL2, KMT2C/MLL3 and KMT2B/MLL4), and the facultative components PAGR1, BACC1, CHD8, E2F6, HCFC1, HCFC2, HSP70, INO80C, KDM6A, KANSL1, LAS1L, MAX, MCRS1, MEN1, MGA, MYST1/MOF, NCOA6, PAXIP1/PTIP, PELP1, PHF20, PRP31, RING2, RUVB1/TIP49A, RUVB2/TIP49B, SENP3, TAF1, TAF4, TAF6, TAF7, TAF9, TEX10 and alpha- and beta-tubulin. Component of a histone methylation complex composed of at least ZNF335, RBBP5, ASH2L and WDR5; the complex may have histone H3-specific methyltransferase activity, however does not have specificity for 'Lys-4' of histone H3. Interacts with ZNF335. Interacts with ASH2L; the interaction is direct. Interacts with WDR5; the interaction is direct. Components of the ZNF335-RBBP5-ASH2L-WDR5 histone methylation complex may associate with components of a nuclear receptor-mediated transcription complex to form a complex at least composed of ZNF335, HCFC1, CCAR2, EMSY, MKI67, RBBP5, ASH2L and WDR5. Within this complex interacts with EMSY. Found in a complex with RBBP5, ASH2L, DPY30, KMT2A, KMT2D and WDR5. Interacts with SETD1A. Interacts with WDR82. Ubiquitously expressed.

The protein localises to the nucleus. Its function is as follows. In embryonic stem (ES) cells, plays a crucial role in the differentiation potential, particularly along the neural lineage, regulating gene induction and H3 'Lys-4' methylation at key developmental loci, including that mediated by retinoic acid. Does not affect ES cell self-renewal. Component or associated component of some histone methyltransferase complexes which regulates transcription through recruitment of those complexes to gene promoters. As part of the MLL1/MLL complex, involved in mono-, di- and trimethylation at 'Lys-4' of histone H3. Histone H3 'Lys-4' methylation represents a specific tag for epigenetic transcriptional activation. In association with ASH2L and WDR5, stimulates the histone methyltransferase activities of KMT2A, KMT2B, KMT2C, KMT2D, SETD1A and SETD1B. This chain is Retinoblastoma-binding protein 5 (RBBP5), found in Homo sapiens (Human).